The following is a 275-amino-acid chain: Putative phosphoenolpyruvate synthase regulatory protein (275 aa).

Gly153–Thr160 is a binding site for ADP.

Belongs to the pyruvate, phosphate/water dikinase regulatory protein family. PSRP subfamily.

The enzyme catalyses [pyruvate, water dikinase] + ADP = [pyruvate, water dikinase]-phosphate + AMP + H(+). The catalysed reaction is [pyruvate, water dikinase]-phosphate + phosphate + H(+) = [pyruvate, water dikinase] + diphosphate. Its function is as follows. Bifunctional serine/threonine kinase and phosphorylase involved in the regulation of the phosphoenolpyruvate synthase (PEPS) by catalyzing its phosphorylation/dephosphorylation. This chain is Putative phosphoenolpyruvate synthase regulatory protein, found in Nitrosomonas europaea (strain ATCC 19718 / CIP 103999 / KCTC 2705 / NBRC 14298).